Reading from the N-terminus, the 158-residue chain is Ribosome maturation factor RimP (158 aa).

It belongs to the RimP family.

It is found in the cytoplasm. In terms of biological role, required for maturation of 30S ribosomal subunits. This Pseudomonas syringae pv. tomato (strain ATCC BAA-871 / DC3000) protein is Ribosome maturation factor RimP.